We begin with the raw amino-acid sequence, 91 residues long: UPF0250 protein PP_4802 (91 aa).

This sequence belongs to the UPF0250 family.

This is UPF0250 protein PP_4802 from Pseudomonas putida (strain ATCC 47054 / DSM 6125 / CFBP 8728 / NCIMB 11950 / KT2440).